The chain runs to 1342 residues: DNA-directed RNA polymerase subunit beta (1342 aa).

2 positions are modified to N6-acetyllysine: Lys-1022 and Lys-1200.

Belongs to the RNA polymerase beta chain family. In terms of assembly, the RNAP catalytic core consists of 2 alpha, 1 beta, 1 beta' and 1 omega subunit. When a sigma factor is associated with the core the holoenzyme is formed, which can initiate transcription.

The enzyme catalyses RNA(n) + a ribonucleoside 5'-triphosphate = RNA(n+1) + diphosphate. DNA-dependent RNA polymerase catalyzes the transcription of DNA into RNA using the four ribonucleoside triphosphates as substrates. The protein is DNA-directed RNA polymerase subunit beta of Escherichia coli O139:H28 (strain E24377A / ETEC).